The following is a 209-amino-acid chain: 60S ribosomal subunit assembly/export protein loc-1 (209 aa).

Disordered stretches follow at residues 1–53 (MAPT…SKGR) and 135–209 (REAR…AAPE). Basic and acidic residues-rich tracts occupy residues 20–33 (GSKD…DGVL) and 135–159 (REAR…TKDS). Positions 126-170 (IKARQMEEIREARRAEAEKKEAERKARLEETKDSLRKKRKRSKQS) form a coiled coil.

The protein belongs to the LOC1 family. In terms of assembly, component of the 66S pre-ribosomal particle.

The protein resides in the nucleus. Its subcellular location is the nucleolus. Functionally, required for efficient assembly and nuclear export of the 60S ribosomal subunit. The sequence is that of 60S ribosomal subunit assembly/export protein loc-1 (loc-1) from Neurospora crassa (strain ATCC 24698 / 74-OR23-1A / CBS 708.71 / DSM 1257 / FGSC 987).